The following is a 387-amino-acid chain: S-adenosylmethionine synthase (387 aa).

His16 serves as a coordination point for ATP. Mg(2+) is bound at residue Asp18. Glu44 contacts K(+). Positions 57 and 100 each coordinate L-methionine. Residues 100–110 (QSPDIAQGVDR) are flexible loop. ATP contacts are provided by residues 167-169 (DAK), 232-233 (RF), Asp241, 247-248 (RK), Ala264, and Lys268. Residue Asp241 participates in L-methionine binding. Lys272 provides a ligand contact to L-methionine.

The protein belongs to the AdoMet synthase family. In terms of assembly, homotetramer; dimer of dimers. It depends on Mg(2+) as a cofactor. The cofactor is K(+).

Its subcellular location is the cytoplasm. It catalyses the reaction L-methionine + ATP + H2O = S-adenosyl-L-methionine + phosphate + diphosphate. Its pathway is amino-acid biosynthesis; S-adenosyl-L-methionine biosynthesis; S-adenosyl-L-methionine from L-methionine: step 1/1. Its function is as follows. Catalyzes the formation of S-adenosylmethionine (AdoMet) from methionine and ATP. The overall synthetic reaction is composed of two sequential steps, AdoMet formation and the subsequent tripolyphosphate hydrolysis which occurs prior to release of AdoMet from the enzyme. The chain is S-adenosylmethionine synthase from Cupriavidus metallidurans (strain ATCC 43123 / DSM 2839 / NBRC 102507 / CH34) (Ralstonia metallidurans).